The primary structure comprises 317 residues: Electron transfer flavoprotein subunit alpha (317 aa).

Belongs to the ETF alpha-subunit/FixB family. In terms of assembly, heterodimer of an alpha and a beta subunit. It depends on FAD as a cofactor.

It is found in the cytoplasm. Its pathway is lipid metabolism; butanoate metabolism. In terms of biological role, part of an electron transfer flavoprotein involved in syntrophic growth of S.wolfei with butyrate. Probably receives electrons from butyryl-CoA dehydrogenases, and transfers them to the membrane-bound quinone oxidoreductase Swol_0698. The polypeptide is Electron transfer flavoprotein subunit alpha (Syntrophomonas wolfei subsp. wolfei (strain DSM 2245B / Goettingen)).